Reading from the N-terminus, the 212-residue chain is Transmembrane emp24 domain-containing protein p24delta7 (212 aa).

A signal peptide spans 1-22 (MNHRRSSIVLLILSILSPVTLS). Over 23-179 (IRYELLSGHT…HNLNIATNSK (157 aa)) the chain is Lumenal. A GOLD domain is found at 32–147 (TKCISEEIHA…VETMEFEVKK (116 aa)). Positions 162-175 (LRDREEEMHNLNIA) form a coiled coil. R165 carries the omega-N-methylated arginine modification. Residues 180–200 (MAWLSFVSLAVCLSVAGLQFW) traverse the membrane as a helical segment. At 201-212 (HLKTFFQKKKLI) the chain is on the cytoplasmic side. The COPII vesicle coat-binding motif lies at 205-206 (FF). The COPI vesicle coat-binding motif lies at 205–212 (FFQKKKLI).

The protein belongs to the EMP24/GP25L family. Probably oligomerizes with other members of the EMP24/GP25L family. Associates with the COPI vesicle coat (coatomer). Associates with the COPII vesicle coat (coatomer).

The protein localises to the endoplasmic reticulum membrane. It is found in the golgi apparatus. It localises to the cis-Golgi network membrane. Its subcellular location is the golgi stack membrane. Involved in vesicular protein trafficking. Mainly functions in the early secretory pathway. Thought to act as cargo receptor at the lumenal side for incorporation of secretory cargo molecules into transport vesicles and to be involved in vesicle coat formation at the cytoplasmic side. The chain is Transmembrane emp24 domain-containing protein p24delta7 from Arabidopsis thaliana (Mouse-ear cress).